Consider the following 356-residue polypeptide: Stomatin-like protein 2, mitochondrial (356 aa).

The transit peptide at 1–28 (MLARAARGTGALLLRGSLLASGRAPRRA) directs the protein to the mitochondrion. Serine 17 carries the phosphoserine; by PKC/PRKCZ modification. At tyrosine 124 the chain carries Phosphotyrosine. Lysine 145 bears the N6-acetyllysine; alternate mark. Lysine 145 is subject to N6-succinyllysine; alternate. Positions 215–252 (INVAEGKKQAQILASEAEKAEQINQAAGEASAVLAKAK) form a coiled coil. Lysine 233 is subject to N6-acetyllysine. Residues 321-356 (KAPVPGTPDSLSSGSSRDVQGTDASLDEELDRVKMS) form a disordered region. Threonine 327 bears the Phosphothreonine mark. Residues 329-343 (DSLSSGSSRDVQGTD) show a composition bias toward polar residues. Phosphoserine is present on serine 330.

It belongs to the band 7/mec-2 family. In terms of assembly, forms homooligomers. Interacts with MFN2; may form heterooligomers. Interacts with CACNA2D2. Interacts with PHB1 and PHB2; recruits them to cardiolipin-enriched mitochondrial membranes and stabilizes them. In terms of processing, hyperphosphorylated at Ser-17 in some patients with monoclonal gammopathy of undetermined significance (MGUS), multiple myeloma (MM) and Waldenstrom macroglobulinemia due to impaired dephosphorylation by PP2A. As to expression, ubiquitously expressed at low levels. Expressed in lymphoid tissues (at protein level).

It localises to the cell membrane. The protein localises to the mitochondrion. It is found in the mitochondrion inner membrane. Its subcellular location is the mitochondrion intermembrane space. The protein resides in the membrane raft. It localises to the cytoplasm. The protein localises to the cytoskeleton. Its function is as follows. Mitochondrial protein that probably regulates the biogenesis and the activity of mitochondria. Stimulates cardiolipin biosynthesis, binds cardiolipin-enriched membranes where it recruits and stabilizes some proteins including prohibitin and may therefore act in the organization of functional microdomains in mitochondrial membranes. Through regulation of the mitochondrial function may play a role into several biological processes including cell migration, cell proliferation, T-cell activation, calcium homeostasis and cellular response to stress. May play a role in calcium homeostasis through negative regulation of calcium efflux from mitochondria. Required for mitochondrial hyperfusion a pro-survival cellular response to stress which results in increased ATP production by mitochondria. May also regulate the organization of functional domains at the plasma membrane and play a role in T-cell activation through association with the T-cell receptor signaling complex and its regulation. In Homo sapiens (Human), this protein is Stomatin-like protein 2, mitochondrial (STOML2).